We begin with the raw amino-acid sequence, 128 residues long: MIQVLLVTICLAVFPFHGSSIILESGNVNDYEVVYPKKVTLLPTGAMNSANPCCDPITCKPRKGEHCVSGPCCRNCKFLNPGTICKRTMLDGLNDYCTGITSDCPRNPWKSEEDEMKWSATAKGSVLM.

Positions 1–20 are cleaved as a signal peptide; sequence MIQVLLVTICLAVFPFHGSS. A propeptide spanning residues 21–46 is cleaved from the precursor; sequence IILESGNVNDYEVVYPKKVTLLPTGA. Positions 47–111 constitute a Disintegrin domain; it reads MNSANPCCDP…SDCPRNPWKS (65 aa). 4 disulfide bridges follow: cysteine 53-cysteine 76, cysteine 67-cysteine 73, cysteine 72-cysteine 97, and cysteine 85-cysteine 104. Positions 89 to 91 match the Cell attachment site; atypical (MLD) motif; the sequence is MLD. The propeptide occupies 112–128; the sequence is EEDEMKWSATAKGSVLM.

It belongs to the disintegrin family. Dimeric disintegrin subfamily. In terms of assembly, heterodimer with subunit beta; disulfide-linked. Expressed by the venom gland.

Its subcellular location is the secreted. Inhibits ADP-induced human platelet aggregation. Antagonist of alpha-IIb/beta-3 (ITGA2B/ITGB3). Also avidly binds to the laminin-binding beta-1 integrins (alpha-3/beta-1 (ITGA3/ITGB1), alpha-6/beta-1 (ITGA6/ITGB1), and alpha-7/beta-1 (ITGA7/ITGB1)) in an RGD-independent manner. The sequence is that of Disintegrin lebein-2-alpha from Macrovipera lebetinus (Levantine viper).